The following is a 219-amino-acid chain: Carbonic anhydrase 1 (219 aa).

Zn(2+) is bound by residues Cys-39, Asp-41, His-98, and Cys-101.

It belongs to the beta-class carbonic anhydrase family. Oligomer. Zn(2+) is required as a cofactor.

The enzyme catalyses hydrogencarbonate + H(+) = CO2 + H2O. Its function is as follows. Reversible hydration of carbon dioxide. Carbon dioxide formed in the bicarbonate-dependent decomposition of cyanate by cyanase (CynS) diffuses out of the cell faster than it would be hydrated to bicarbonate, so the apparent function of this enzyme is to catalyze the hydration of carbon dioxide and thus prevent depletion of cellular bicarbonate. The protein is Carbonic anhydrase 1 (cynT) of Escherichia coli O157:H7.